A 110-amino-acid polypeptide reads, in one-letter code: Snake venom vascular endothelial growth factor toxin (110 aa).

At Gln-1 the chain carries Pyrrolidone carboxylic acid. Cystine bridges form between Cys-14-Cys-56, Cys-45-Cys-91, and Cys-49-Cys-93.

The protein belongs to the PDGF/VEGF growth factor family. Snake venom VEGF subfamily. As to quaternary structure, homodimer; disulfide-linked. As to expression, expressed by the venom gland.

The protein resides in the secreted. Functionally, snake venom VEGFs that may contribute to venom dispersion and prey subjugation by inducing vascular permeability and hypotension. This protein potently stimulates dermal human microvascular endothelial cell (dHMVEC) proliferation in a VEGFR-2 dependent manner. This stimulatory effect is correlated with activation of the MAPK Erk1/2 signaling pathway. It also appears to be a chemoattractant for migration of these cells and stimulates their radial migration in a collagen gel. In vivo, it induces angiogenesis in a Japanese quail assay. This pro-angiogenic effect may also be related to its interaction with VEGFR-2. In addition, it may induce an increase in capillary permeability after intradermal injection, as well as a drastic hypotensive effect after intravenous injection. The hypotension is mediated by nitric oxide (NO), which is produced by VEGF-activated endothelium NO synthase. The polypeptide is Snake venom vascular endothelial growth factor toxin (Daboia palaestinae (Palestine viper)).